Consider the following 216-residue polypeptide: Trimethylamine corrinoid protein 1 (216 aa).

In terms of domain architecture, B12-binding N-terminal spans 1 to 92 (MASKEEIIAK…EMEKRKSETK (92 aa)). The region spanning 94–216 (LGTVVIGTIE…VVSKVRAVLL (123 aa)) is the B12-binding domain. Histidine 107 provides a ligand contact to methylcob(III)alamin.

This sequence belongs to the methylamine corrinoid protein family. Can form a complex with MttB.

Its pathway is one-carbon metabolism; methanogenesis from trimethylamine. Functionally, acts probably as a methyl group carrier between MttB and either MtbA or MtaA. In Methanosarcina acetivorans (strain ATCC 35395 / DSM 2834 / JCM 12185 / C2A), this protein is Trimethylamine corrinoid protein 1 (mttC1).